A 488-amino-acid chain; its full sequence is Ergochrome gene cluster transcriptional regulator CPUR_05433 (488 aa).

Residues 1 to 29 form a disordered region; that stretch reads MDHSIGGRNCQSGGTTASAPRSTGSDEFP. Positions 9-25 are enriched in polar residues; that stretch reads NCQSGGTTASAPRSTGS. The segment at residues 36–63 is a DNA-binding region (zn(2)-C6 fungal-type); it reads CHACSLSKVRCSKEKPSCSRCAKRGVPC.

Its subcellular location is the nucleus. Its function is as follows. Transcription factor; part of the gene cluster responsible for the typical purple-black color of the ergot sclerotia. The ergochrome gene cluster produces several ergot pigments including the yellow ergochrome secalonic acid and its derivatives, as well as the red anthraquinones endocrocin and clavorubin. This chain is Ergochrome gene cluster transcriptional regulator CPUR_05433, found in Claviceps purpurea (strain 20.1) (Ergot fungus).